Reading from the N-terminus, the 318-residue chain is MANEMEFEKPILELKSKIADLKEYNETSDVDLTNEIEKLEKRLAKLESSIYSNMTAWDKFQVARHPERPTTLDYISLLFEDFMELHGDRTFGDDAAIVGGIATFKGIPVTVIGHQRGKDTKDNLHRNFGMPHPEGFRKALRLMKQADKFGRPIICFIDTKGAYPGRAAEERGQSEAIARNLYEMSDMKVPIISIVIGEGGSGGALALGVGNQIFMLENAVFSVISPEGAAAILWKDASLAKKAAESMRITAGDLFELGITDGIIPEVKGGAHRDLTAQAEEINKTITKSLHALMAFSEEQLIKQRYEKFKKIGVYETI.

In terms of domain architecture, CoA carboxyltransferase C-terminal spans K38 to A292.

This sequence belongs to the AccA family. As to quaternary structure, acetyl-CoA carboxylase is a heterohexamer composed of biotin carboxyl carrier protein (AccB), biotin carboxylase (AccC) and two subunits each of ACCase subunit alpha (AccA) and ACCase subunit beta (AccD).

It is found in the cytoplasm. The enzyme catalyses N(6)-carboxybiotinyl-L-lysyl-[protein] + acetyl-CoA = N(6)-biotinyl-L-lysyl-[protein] + malonyl-CoA. It participates in lipid metabolism; malonyl-CoA biosynthesis; malonyl-CoA from acetyl-CoA: step 1/1. Its function is as follows. Component of the acetyl coenzyme A carboxylase (ACC) complex. First, biotin carboxylase catalyzes the carboxylation of biotin on its carrier protein (BCCP) and then the CO(2) group is transferred by the carboxyltransferase to acetyl-CoA to form malonyl-CoA. The sequence is that of Acetyl-coenzyme A carboxylase carboxyl transferase subunit alpha from Listeria monocytogenes serovar 1/2a (strain ATCC BAA-679 / EGD-e).